The chain runs to 682 residues: Transcription activator of gluconeogenesis PODANS_4_8760 (682 aa).

Residues 1–72 (MPEDGGPFGS…KDPLRPRRKK (72 aa)) form a disordered region. Low complexity predominate over residues 9 to 21 (GSEAAEASGAMSE). Basic and acidic residues-rich tracts occupy residues 29–41 (HEPHHKDEDDRMS) and 54–67 (GEVKKKYDPKDPLR). A DNA-binding region (zn(2)-C6 fungal-type) is located at residues 77–105 (CYACQRAHLTCGDERPCQRCIKRGLQDSC). Disordered stretches follow at residues 122 to 148 (EALRPVLGPNYNPNAPSSRHGGQRHHS), 181 to 211 (LTESLPFNSQQSPVSPTFQQTSSNPPISGMV), 325 to 375 (PAGP…RPSK), 509 to 541 (NRNTNLGGTGVRTTPRLKSLNESSAENGGAASG), and 586 to 622 (TDKPAAGGGGGAGEEERKPDPSAAPRQQEKDSRHSIL). 3 stretches are compositionally biased toward polar residues: residues 185–206 (LPFNSQQSPVSPTFQQTSSNPP), 329–345 (TSLQSPSTENNSPQPTT), and 354–373 (PTMSQYPNAPGAKSSSNSRP).

It belongs to the ERT1/acuK family.

The protein localises to the nucleus. In terms of biological role, transcription factor which regulates nonfermentable carbon utilization. Activator of gluconeogenetic genes. The chain is Transcription activator of gluconeogenesis PODANS_4_8760 from Podospora anserina (strain S / ATCC MYA-4624 / DSM 980 / FGSC 10383) (Pleurage anserina).